Consider the following 439-residue polypeptide: Fibroleukin (439 aa).

An N-terminal signal peptide occupies residues M1–A23. An N-linked (GlcNAc...) asparagine glycan is attached at N25. Residues S73–N165 are a coiled coil. The interval A103 to G126 is disordered. N-linked (GlcNAc...) asparagine glycosylation is found at N179, N235, N263, and N336. The Fibrinogen C-terminal domain occupies P204–H436. C213 and C242 are joined by a disulfide. C371 and C384 are disulfide-bonded.

In terms of assembly, homotetramer; disulfide-linked. As to expression, constitutively expressed in cytotoxic T-cells.

Its subcellular location is the secreted. In terms of biological role, may play a role in physiologic lymphocyte functions at mucosal sites. This chain is Fibroleukin (FGL2), found in Homo sapiens (Human).